Consider the following 213-residue polypeptide: Small ribosomal subunit protein uS3 (213 aa).

A KH type-2 domain is found at 38-106 (IRKYVKEKIF…EFALEVSEIR (69 aa)).

This sequence belongs to the universal ribosomal protein uS3 family. As to quaternary structure, part of the 30S ribosomal subunit. Forms a tight complex with proteins S10 and S14.

Its function is as follows. Binds the lower part of the 30S subunit head. Binds mRNA in the 70S ribosome, positioning it for translation. The chain is Small ribosomal subunit protein uS3 from Maridesulfovibrio salexigens (strain ATCC 14822 / DSM 2638 / NCIMB 8403 / VKM B-1763) (Desulfovibrio salexigens).